Here is a 35-residue protein sequence, read N- to C-terminus: Natriuretic peptide TNPb (35 aa).

Cys9 and Cys25 are disulfide-bonded.

In terms of tissue distribution, expressed by the venom gland.

It is found in the secreted. Snake venom natriuretic peptide that exhibits vasoactive and probable hypotensive activity. Is only weakly active on natriuretic peptide receptor-C (NPR3). Stimulates cGMP production through the natriuretic peptide receptor 1 (NPR1) with moderate potencies for the rat NPR1 (EC(50)=1200 nM), and very weak potencies over human NPR1 (30% activation at 10 uM). In vivo, does not impact systolic and diastolic blood pressure, as well as heart rate, when intravenously injected in conscious rabbits. Does not affect the bradycardia due to cardiac afferent stimulation (Bezold-Jarisch reflex). The polypeptide is Natriuretic peptide TNPb (Oxyuranus microlepidotus (Inland taipan)).